Reading from the N-terminus, the 257-residue chain is tRNA-cytidine(32) 2-sulfurtransferase (257 aa).

The PP-loop motif signature appears at 37 to 42 (SGGKDS). The [4Fe-4S] cluster site is built by C112, C115, and C202.

The protein belongs to the TtcA family. Homodimer. Requires Mg(2+) as cofactor. [4Fe-4S] cluster is required as a cofactor.

It localises to the cytoplasm. The enzyme catalyses cytidine(32) in tRNA + S-sulfanyl-L-cysteinyl-[cysteine desulfurase] + AH2 + ATP = 2-thiocytidine(32) in tRNA + L-cysteinyl-[cysteine desulfurase] + A + AMP + diphosphate + H(+). It participates in tRNA modification. Its function is as follows. Catalyzes the ATP-dependent 2-thiolation of cytidine in position 32 of tRNA, to form 2-thiocytidine (s(2)C32). The sulfur atoms are provided by the cysteine/cysteine desulfurase (IscS) system. This chain is tRNA-cytidine(32) 2-sulfurtransferase, found in Geobacter sulfurreducens (strain ATCC 51573 / DSM 12127 / PCA).